Reading from the N-terminus, the 683-residue chain is MPLLSQMQEYQADTTFAQLEALRQKLREYEYHYHVLDNPLVPDAEYDRLMNELKNLEWQHPEWITVDSPTQRVGAKPLDGFAQVTHEIPMLSLDNAFSDEELDGFLRRMESYITEDPHTLAFCCEPKLDGLAVSILYVDGVLSQAATRGDGSTGEDITSNIRTIRNIPLKLNMDNPPARLEVRGEVFMPQKGFEELNERALEKGEKTFANPRNAAAGSLRQLDPKITRQRPLVLNAYGIGVYESDDELPATHFERLQWLKSIGIPVNNEIRLATGREQLLAFYANIQAKRPTLGYDIDGTVLKVNDIGLQEQLGFISRSPRWAIAYKFPSQEEMTVLNDVEFQVGRTGAITPVAKLEPVFVAGVTVSNATLHNGDEIERLGIVIGDTVIIRRAGDVIPQIVGVVMDRRPENAKKIEFPTACPVCESAVVRVEGEAVARCTGGLFCGAQRKEALKHFVSRKAMDIDGVGEKLIEQLMERELVHTPADLFKLDHTTLMRLERMGEKSAQNALNSIEKAKNTTLARFLFALGIRDVGEATAQNLANHFHNLAAIRTATFEQLQAVQDVGEVVANRIVRFWQEPHNVAVVEDLISQGVHWQDVIQVEIADNPLKGKNVVLTGTLTQLTRDQAKALLQSFGCKVSGSVSSKTDYLIAGEKAGSKLAKAQELGVKILTEQEFIALTGEN.

Residues D43–D47, S92–L93, and E125 each bind NAD(+). Catalysis depends on K127, which acts as the N6-AMP-lysine intermediate. Residues R148, E185, K303, and K327 each contribute to the NAD(+) site. Zn(2+) contacts are provided by C421, C424, C439, and C445. The 80-residue stretch at I604–N683 folds into the BRCT domain.

The protein belongs to the NAD-dependent DNA ligase family. LigA subfamily. Requires Mg(2+) as cofactor. Mn(2+) serves as cofactor.

It catalyses the reaction NAD(+) + (deoxyribonucleotide)n-3'-hydroxyl + 5'-phospho-(deoxyribonucleotide)m = (deoxyribonucleotide)n+m + AMP + beta-nicotinamide D-nucleotide.. In terms of biological role, DNA ligase that catalyzes the formation of phosphodiester linkages between 5'-phosphoryl and 3'-hydroxyl groups in double-stranded DNA using NAD as a coenzyme and as the energy source for the reaction. It is essential for DNA replication and repair of damaged DNA. The chain is DNA ligase from Actinobacillus pleuropneumoniae serotype 5b (strain L20).